The following is a 220-amino-acid chain: Zinc-finger homeodomain protein 2 (220 aa).

Residues 1–11 (MNFEDQEEDME) show a composition bias toward acidic residues. The interval 1-40 (MNFEDQEEDMEMSGVNPPCGYDSLSGEGATSSGGGGVGRS) is disordered. Positions 31–40 (SSGGGGVGRS) are enriched in gly residues. The ZF-HD dimerization-type zinc-finger motif lies at 49–98 (YRECLKNHAVNIGGHAVDGCCEFMPSGEDGTLDALKCAACGCHRNFHRKE). Residues 100–160 (ESIGGRAHRV…SSSGGTTKRF (61 aa)) are disordered. Residues 157 to 220 (TKRFRTKFTA…NNKNSLGKKP (64 aa)) constitute a DNA-binding region (homeobox; atypical).

Homo or heterodimer. Interacts with ZHD1, ZHD3, ZHD4, ZHD5, ZHD6, ZHD7, ZHD8, ZHD9, ZHD10 and ZHD11. In terms of tissue distribution, mostly expressed in flowers and, to a lower extent, in inflorescence, stems and leaves.

Its subcellular location is the nucleus. In terms of biological role, essential protein. Putative transcription factor. The chain is Zinc-finger homeodomain protein 2 (ZHD1) from Arabidopsis thaliana (Mouse-ear cress).